Consider the following 678-residue polypeptide: uncharacterized protein (678 aa).

2 helical membrane passes run 14-34 (LMFA…WTGL) and 180-200 (GAVI…IGGF).

Belongs to the mycobacterial PPE family.

Its subcellular location is the cell membrane. This is an uncharacterized protein from Mycobacterium tuberculosis (strain ATCC 25618 / H37Rv).